Here is a 103-residue protein sequence, read N- to C-terminus: Large ribosomal subunit protein uL24 (103 aa).

Belongs to the universal ribosomal protein uL24 family. Part of the 50S ribosomal subunit.

In terms of biological role, one of two assembly initiator proteins, it binds directly to the 5'-end of the 23S rRNA, where it nucleates assembly of the 50S subunit. Functionally, one of the proteins that surrounds the polypeptide exit tunnel on the outside of the subunit. This is Large ribosomal subunit protein uL24 from Ruegeria pomeroyi (strain ATCC 700808 / DSM 15171 / DSS-3) (Silicibacter pomeroyi).